Here is a 637-residue protein sequence, read N- to C-terminus: Chaperone protein DnaK (637 aa).

Phosphothreonine; by autocatalysis is present on Thr198. The segment at 600–637 (IAQQQAQAQQAQGADAGAQSKDDDVVDAEFEEVKDDKK) is disordered. Low complexity predominate over residues 601–618 (AQQQAQAQQAQGADAGAQ). Residues 623-637 (DVVDAEFEEVKDDKK) show a composition bias toward acidic residues.

It belongs to the heat shock protein 70 family.

In terms of biological role, acts as a chaperone. The sequence is that of Chaperone protein DnaK from Vibrio parahaemolyticus serotype O3:K6 (strain RIMD 2210633).